Here is a 101-residue protein sequence, read N- to C-terminus: Urease subunit beta (101 aa).

Belongs to the urease beta subunit family. As to quaternary structure, heterotrimer of UreA (gamma), UreB (beta) and UreC (alpha) subunits. Three heterotrimers associate to form the active enzyme.

It is found in the cytoplasm. The enzyme catalyses urea + 2 H2O + H(+) = hydrogencarbonate + 2 NH4(+). The protein operates within nitrogen metabolism; urea degradation; CO(2) and NH(3) from urea (urease route): step 1/1. The polypeptide is Urease subunit beta (Rhizobium johnstonii (strain DSM 114642 / LMG 32736 / 3841) (Rhizobium leguminosarum bv. viciae)).